The sequence spans 404 residues: NADH-quinone oxidoreductase subunit D 1 (404 aa).

The protein belongs to the complex I 49 kDa subunit family. NDH-1 is composed of 14 different subunits. Subunits NuoB, C, D, E, F, and G constitute the peripheral sector of the complex.

The protein resides in the cell inner membrane. The catalysed reaction is a quinone + NADH + 5 H(+)(in) = a quinol + NAD(+) + 4 H(+)(out). NDH-1 shuttles electrons from NADH, via FMN and iron-sulfur (Fe-S) centers, to quinones in the respiratory chain. The immediate electron acceptor for the enzyme in this species is believed to be ubiquinone. Couples the redox reaction to proton translocation (for every two electrons transferred, four hydrogen ions are translocated across the cytoplasmic membrane), and thus conserves the redox energy in a proton gradient. This is NADH-quinone oxidoreductase subunit D 1 from Sorangium cellulosum (strain So ce56) (Polyangium cellulosum (strain So ce56)).